The following is a 524-amino-acid chain: Magnesium/proton exchanger 2 (524 aa).

11 consecutive transmembrane segments (helical) span residues 28–48 (GVRAFIYTVVLAYCFIGLSAI), 88–108 (IADVALLAFGTSFPQISLATI), 125–145 (GTLVGSAAFDLFPIHAVCVVM), 157–177 (LGVWLVELFWSFWAYIWLYII), 185–205 (VITLWEALLTVLQYGLLLLHA), 325–345 (VIGISWNLIIAPWKMLFAFIP), 349–369 (IAHGWIAFICSLIFISGIAYG), 377–397 (ISCVTGVSPYVIAFTALAAGT), 430–450 (IYVGIGVPWLVDTMYNYLFVY), 462–482 (LSFSLLVFFATSFGCITVLVL), and 496–516 (MWAWATSVYFMILWVVFVVLS).

This sequence belongs to the Ca(2+):cation antiporter (CaCA) (TC 2.A.19) family. MHX subfamily.

It is found in the vacuole membrane. In terms of biological role, vacuolar transporter that exchanges protons with Mg(2+), Zn(2+) and Fe(2+) ions. May control the partitioning of Mg(2+) and Zn(2+) between plant organs. The chain is Magnesium/proton exchanger 2 (MHX2) from Oryza sativa subsp. japonica (Rice).